The following is a 94-amino-acid chain: MAAAATTKKRTQRKKKDPNAPKRAMSAYMFFANENRDIVRAENPGISFGQVGRVLGEKWKALSDDEKQPYEAKAEADKKRYESEKELYNATKAA.

2 disordered regions span residues 1–23 (MAAAATTKKRTQRKKKDPNAPKR) and 64–94 (DDEKQPYEAKAEADKKRYESEKELYNATKAA). A compositionally biased stretch (basic residues) spans 7–16 (TKKRTQRKKK). Positions 21–89 (PKRAMSAYMF…RYESEKELYN (69 aa)) form a DNA-binding region, HMG box. Over residues 64 to 87 (DDEKQPYEAKAEADKKRYESEKEL) the composition is skewed to basic and acidic residues.

The protein belongs to the NHP6 family. Weakly associates with the stable SPT16-POB3 heterodimer to form the FACT complex.

It localises to the nucleus. The protein localises to the chromosome. In terms of biological role, DNA-binding protein that induces severe bending of DNA. Required for DNA-binding by the FACT complex, a general chromatin factor that acts to reorganize nucleosomes. The FACT complex is involved in multiple processes that require DNA as a template such as mRNA elongation, DNA replication and DNA repair. Also augments the fidelity of transcription by RNA polymerase III independently of any role in the FACT complex. The sequence is that of Non-histone chromosomal protein 6 (NHP6) from Eremothecium gossypii (strain ATCC 10895 / CBS 109.51 / FGSC 9923 / NRRL Y-1056) (Yeast).